The primary structure comprises 100 residues: Putative pterin-4-alpha-carbinolamine dehydratase (100 aa).

Belongs to the pterin-4-alpha-carbinolamine dehydratase family.

It catalyses the reaction (4aS,6R)-4a-hydroxy-L-erythro-5,6,7,8-tetrahydrobiopterin = (6R)-L-erythro-6,7-dihydrobiopterin + H2O. This is Putative pterin-4-alpha-carbinolamine dehydratase from Alteromonas mediterranea (strain DSM 17117 / CIP 110805 / LMG 28347 / Deep ecotype).